Consider the following 80-residue polypeptide: Peroxidase (80 aa).

Residues 56-80 (DANEAEANSDLPGFNSSRSELEAAF) are disordered. Substrate is bound at residue P67. N-linked (GlcNAc...) asparagine glycosylation occurs at N70.

Belongs to the peroxidase family. Classical plant (class III) peroxidase subfamily. The cofactor is Ca(2+). It depends on heme b as a cofactor.

The catalysed reaction is 2 a phenolic donor + H2O2 = 2 a phenolic radical donor + 2 H2O. Functionally, removal of H(2)O(2), oxidation of toxic reductants, biosynthesis and degradation of lignin, suberization, auxin catabolism, response to environmental stresses such as wounding, pathogen attack and oxidative stress. These functions might be dependent on each isozyme/isoform in each plant tissue. The protein is Peroxidase of Triticum aestivum (Wheat).